The sequence spans 246 residues: PF03932 family protein CutC (246 aa).

Belongs to the CutC family.

It localises to the cytoplasm. The chain is PF03932 family protein CutC from Treponema denticola (strain ATCC 35405 / DSM 14222 / CIP 103919 / JCM 8153 / KCTC 15104).